The primary structure comprises 416 residues: Serine hydroxymethyltransferase 1 (416 aa).

Residues Leu121 and 125–127 (GHL) contribute to the (6S)-5,6,7,8-tetrahydrofolate site. Lys229 is modified (N6-(pyridoxal phosphate)lysine). (6S)-5,6,7,8-tetrahydrofolate-binding positions include Glu245 and 354 to 356 (SPF).

Belongs to the SHMT family. As to quaternary structure, homodimer. Pyridoxal 5'-phosphate is required as a cofactor.

The protein localises to the cytoplasm. It carries out the reaction (6R)-5,10-methylene-5,6,7,8-tetrahydrofolate + glycine + H2O = (6S)-5,6,7,8-tetrahydrofolate + L-serine. The protein operates within one-carbon metabolism; tetrahydrofolate interconversion. It participates in amino-acid biosynthesis; glycine biosynthesis; glycine from L-serine: step 1/1. In terms of biological role, catalyzes the reversible interconversion of serine and glycine with tetrahydrofolate (THF) serving as the one-carbon carrier. This reaction serves as the major source of one-carbon groups required for the biosynthesis of purines, thymidylate, methionine, and other important biomolecules. Also exhibits THF-independent aldolase activity toward beta-hydroxyamino acids, producing glycine and aldehydes, via a retro-aldol mechanism. The sequence is that of Serine hydroxymethyltransferase 1 from Photobacterium profundum (strain SS9).